Consider the following 98-residue polypeptide: Large ribosomal subunit protein uL23 (98 aa).

The protein belongs to the universal ribosomal protein uL23 family. As to quaternary structure, part of the 50S ribosomal subunit. Contacts protein L29, and trigger factor when it is bound to the ribosome.

In terms of biological role, one of the early assembly proteins it binds 23S rRNA. One of the proteins that surrounds the polypeptide exit tunnel on the outside of the ribosome. Forms the main docking site for trigger factor binding to the ribosome. This chain is Large ribosomal subunit protein uL23, found in Methylobacterium nodulans (strain LMG 21967 / CNCM I-2342 / ORS 2060).